The primary structure comprises 55 residues: Small polypeptide DEVIL 10 (55 aa).

The N-linked (GlcNAc...) asparagine glycan is linked to Asn7. The required for DVL/RTFL small polypeptide activity stretch occupies residues 19 to 50 (RFGDRCLLMAKQQRTRLYILRRCVSMLLCWHD). Residues 32–48 (RTRLYILRRCVSMLLCW) form a helical membrane-spanning segment.

The protein belongs to the DVL/RTFL small polypeptides family.

The protein resides in the cell membrane. In terms of biological role, small polypeptide acting as a regulatory molecule which coordinates cellular responses required for differentiation, growth and development, probably by restricting polar cell proliferation in lateral organs and coordinating socket cell recruitment and differentiation at trichome sites. The protein is Small polypeptide DEVIL 10 of Arabidopsis thaliana (Mouse-ear cress).